The primary structure comprises 202 residues: Small ribosomal subunit protein uS4c (202 aa).

Residues methionine 1–arginine 13 are compositionally biased toward basic residues. A disordered region spans residues methionine 1–lysine 41. A compositionally biased stretch (low complexity) spans lysine 29 to lysine 41. The region spanning methionine 90 to methionine 153 is the S4 RNA-binding domain.

This sequence belongs to the universal ribosomal protein uS4 family. In terms of assembly, part of the 30S ribosomal subunit. Contacts protein S5. The interaction surface between S4 and S5 is involved in control of translational fidelity.

The protein resides in the plastid. Its function is as follows. One of the primary rRNA binding proteins, it binds directly to 16S rRNA where it nucleates assembly of the body of the 30S subunit. Functionally, with S5 and S12 plays an important role in translational accuracy. The protein is Small ribosomal subunit protein uS4c (rps4) of Aneura mirabilis (Parasitic liverwort).